Here is a 454-residue protein sequence, read N- to C-terminus: UPF0210 protein EUBREC_1565 (454 aa).

It belongs to the UPF0210 family. As to quaternary structure, homodimer.

This is UPF0210 protein EUBREC_1565 from Agathobacter rectalis (strain ATCC 33656 / DSM 3377 / JCM 17463 / KCTC 5835 / VPI 0990) (Eubacterium rectale).